Reading from the N-terminus, the 349-residue chain is Terpene cyclase janA (349 aa).

N-linked (GlcNAc...) asparagine glycosylation occurs at asparagine 80. Transmembrane regions (helical) follow at residues 81-101 (LSLY…VIVL), 116-136 (LAFL…IPAI), 155-175 (IGFY…LAAL), 189-209 (LIAV…IIHY), 223-243 (IACA…LWFA), and 308-328 (VILI…VALL).

Belongs to the membrane-bound ascI terpene cyclase family.

It localises to the membrane. It functions in the pathway secondary metabolite biosynthesis. Part of the gene cluster that mediates the biosynthesis of the indole diterpenes janthitremanes such as shearinine K or shearinine A. The geranylgeranyl diphosphate (GGPP) synthase janG catalyzes the first step in janthitremane biosynthesis via conversion of farnesyl pyrophosphate and isopentyl pyrophosphate into geranylgeranyl pyrophosphate (GGPP). Condensation of indole-3-glycerol phosphate with GGPP by the prenyl transferase janC then forms 3-geranylgeranylindole (3-GGI). Epoxidation by the FAD-dependent monooxygenase janM leads to a epoxidized-GGI that is substrate of the terpene cyclase janB for cyclization to yield paspaline. Paspaline is subsequently converted to 13-desoxypaspaline by the cytochrome P450 monooxygenase janP, via beta-PC-M6 in a series of alpha-face oxidations. The cytochrome P450 monooxygenase janQ is proposed to carry out sequential beta-face oxidation steps at C-7 and C-13 of 13-desoxypaspaline to form paspalicine and paspalinine respectively. The indole diterpene prenyltransferase janD may then convert paspalinine into shearinine K which is substrate of janO and/or additional enzymes for oxidation and cyclization to generate shearinine A. The polypeptide is Terpene cyclase janA (Penicillium janthinellum (Penicillium vitale)).